Consider the following 174-residue polypeptide: Methylated-DNA--protein-cysteine methyltransferase (174 aa).

Catalysis depends on C144, which acts as the Nucleophile; methyl group acceptor.

Belongs to the MGMT family.

The protein localises to the cytoplasm. It catalyses the reaction a 6-O-methyl-2'-deoxyguanosine in DNA + L-cysteinyl-[protein] = S-methyl-L-cysteinyl-[protein] + a 2'-deoxyguanosine in DNA. It carries out the reaction a 4-O-methyl-thymidine in DNA + L-cysteinyl-[protein] = a thymidine in DNA + S-methyl-L-cysteinyl-[protein]. In terms of biological role, involved in the cellular defense against the biological effects of O6-methylguanine (O6-MeG) and O4-methylthymine (O4-MeT) in DNA. Repairs the methylated nucleobase in DNA by stoichiometrically transferring the methyl group to a cysteine residue in the enzyme. This is a suicide reaction: the enzyme is irreversibly inactivated. The protein is Methylated-DNA--protein-cysteine methyltransferase of Pyrococcus furiosus (strain ATCC 43587 / DSM 3638 / JCM 8422 / Vc1).